Reading from the N-terminus, the 131-residue chain is Insulin-like 3 (131 aa).

Residues 1-20 (MDPRLPAWALVLLGPALVFA) form the signal peptide. 3 disulfides stabilise this stretch: C34–C116, C46–C129, and C115–C120. A propeptide spans 58–104 (PATGGDRELLQWLERRHLLHGLVADSNLTLGPGLQPLPQTSHHHRHH) (c peptide like).

The protein belongs to the insulin family. Heterodimer of a B chain and an A chain linked by two disulfide bonds. Expressed in prenatal and postnatal Leydig cells. Found as well in the corpus luteum, trophoblast, fetal membranes and breast.

It localises to the secreted. In terms of biological role, seems to play a role in testicular function. May be a trophic hormone with a role in testicular descent in fetal life. Is a ligand for LGR8 receptor. In Homo sapiens (Human), this protein is Insulin-like 3 (INSL3).